We begin with the raw amino-acid sequence, 802 residues long: Fibroblast growth factor receptor 4 (802 aa).

The signal sequence occupies residues 1 to 21 (MRLLLALLGVLLSVPGPPVLS). An Ig-like C2-type 1 domain is found at 22–118 (LEASEEVELE…VLQNLTLITG (97 aa)). Over 22–369 (LEASEEVELE…AAAPEARYTD (348 aa)) the chain is Extracellular. Cysteines 57 and 101 form a disulfide. N112 is a glycosylation site (N-linked (GlcNAc...) asparagine). Residues 119-148 (DSLTSSNDDEDPKSHRDPSNRHSYPQQAPY) are disordered. Ig-like C2-type domains lie at 152–240 (PQRM…YLLD) and 249–349 (PILQ…AWLT). C172 and C224 are oxidised to a cystine. N258, N290, N311, and N322 each carry an N-linked (GlcNAc...) asparagine glycan. Residues C271 and C333 are joined by a disulfide bond. Residues 370 to 390 (IILYASGSLALAVLLLLAGLY) traverse the membrane as a helical segment. Y390 carries the post-translational modification Phosphotyrosine; in variant R-388. Residues 391–802 (RGQALHGRHP…SFPFGSGVQT (412 aa)) are Cytoplasmic-facing. One can recognise a Protein kinase domain in the interval 467-755 (LVLGKPLGEG…VLLAVSEEYL (289 aa)). Residues 473–481 (LGEGCFGQV) and K503 contribute to the ATP site. A Phosphoserine modification is found at S573. The active-site Proton acceptor is D612. Y642, Y643, and Y754 each carry phosphotyrosine; by autocatalysis.

Belongs to the protein kinase superfamily. Tyr protein kinase family. Fibroblast growth factor receptor subfamily. Monomer. Homodimer after ligand binding. Interacts with FGF1, FGF2, FGF4, FGF6, FGF8, FGF9, FGF16, FGF17, FGF18, FGF19, FGF21 and FGF23 (in vitro). Binding affinity for FGF family members is enhanced by interactions between FGFs and heparan sulfate proteoglycans. Interacts with KLB; this strongly increases the affinity for FGF19 and FGF23. Affinity for FGF19 is strongly increased by KLB and sulfated glycosaminoglycans. KLB and KL both interact with the core-glycosylated FGFR4 in the endoplasmic reticulum and promote its degradation, so that only FGFR4 with fully mature N-glycans is expressed at the cell surface. Identified in a complex with NCAM1, CDH2, PLCG1, FRS2, SRC, SHC1, GAP43 and CTTN. Interacts with MMP14 and HIP1. Interacts with STAT3. N-glycosylated. Full maturation of the glycan chains in the Golgi is essential for high affinity interaction with FGF19. Post-translationally, ubiquitinated. Subject to proteasomal degradation when not fully glycosylated. In terms of processing, autophosphorylated. Binding of FGF family members together with heparan sulfate proteoglycan or heparin promotes receptor dimerization and autophosphorylation on tyrosine residues. Autophosphorylation occurs in trans between the two FGFR molecules present in the dimer. As to expression, expressed in gastrointestinal epithelial cells, pancreas, and gastric and pancreatic cancer cell lines.

The protein resides in the cell membrane. The protein localises to the endosome. It is found in the endoplasmic reticulum. It localises to the secreted. The enzyme catalyses L-tyrosyl-[protein] + ATP = O-phospho-L-tyrosyl-[protein] + ADP + H(+). With respect to regulation, present in an inactive conformation in the absence of bound ligand. Ligand binding leads to dimerization and activation by autophosphorylation on tyrosine residues. Tyrosine-protein kinase that acts as a cell-surface receptor for fibroblast growth factors and plays a role in the regulation of cell proliferation, differentiation and migration, and in regulation of lipid metabolism, bile acid biosynthesis, glucose uptake, vitamin D metabolism and phosphate homeostasis. Required for normal down-regulation of the expression of CYP7A1, the rate-limiting enzyme in bile acid synthesis, in response to FGF19. Phosphorylates PLCG1 and FRS2. Ligand binding leads to the activation of several signaling cascades. Activation of PLCG1 leads to the production of the cellular signaling molecules diacylglycerol and inositol 1,4,5-trisphosphate. Phosphorylation of FRS2 triggers recruitment of GRB2, GAB1, PIK3R1 and SOS1, and mediates activation of RAS, MAPK1/ERK2, MAPK3/ERK1 and the MAP kinase signaling pathway, as well as of the AKT1 signaling pathway. Promotes SRC-dependent phosphorylation of the matrix protease MMP14 and its lysosomal degradation. FGFR4 signaling is down-regulated by receptor internalization and degradation; MMP14 promotes internalization and degradation of FGFR4. Mutations that lead to constitutive kinase activation or impair normal FGFR4 inactivation lead to aberrant signaling. The protein is Fibroblast growth factor receptor 4 (FGFR4) of Homo sapiens (Human).